The primary structure comprises 126 residues: Fluoride-specific ion channel FluC (126 aa).

Helical transmembrane passes span 5–25 (ILVA…GAGV), 37–57 (VAIM…VVWA), 65–85 (LSPF…AFSL), and 101–121 (LYVA…LWVA). G75 and T78 together coordinate Na(+).

The protein belongs to the fluoride channel Fluc/FEX (TC 1.A.43) family.

The protein resides in the cell inner membrane. It catalyses the reaction fluoride(in) = fluoride(out). Na(+) is not transported, but it plays an essential structural role and its presence is essential for fluoride channel function. In terms of biological role, fluoride-specific ion channel. Important for reducing fluoride concentration in the cell, thus reducing its toxicity. This is Fluoride-specific ion channel FluC from Roseobacter denitrificans (strain ATCC 33942 / OCh 114) (Erythrobacter sp. (strain OCh 114)).